The primary structure comprises 581 residues: Trehalase (581 aa).

It belongs to the glycosyl hydrolase 15 family. In terms of assembly, monomer.

It catalyses the reaction alpha,alpha-trehalose + H2O = alpha-D-glucose + beta-D-glucose. The protein operates within glycan degradation; trehalose degradation; D-glucose from alpha,alpha-trehalose: step 1/1. With respect to regulation, inhibited by validamycin A. Functionally, catalyzes the hydrolysis of alpha,alpha-trehalose into two molecules of D-glucose. The polypeptide is Trehalase (Thermoplasma acidophilum (strain ATCC 25905 / DSM 1728 / JCM 9062 / NBRC 15155 / AMRC-C165)).